We begin with the raw amino-acid sequence, 995 residues long: Polyprotein nsP1234 (995 aa).

Residues Gly-30 and Phe-32 each coordinate ADP-D-ribose. Zn(2+)-binding residues include Cys-180, Cys-182, Cys-205, and Cys-223. 2 consecutive short sequence motifs (FGDF; binding to host G3BP1) follow at residues 347 to 350 and 364 to 367; these read FGDL and FGDF. The region spanning 749-864 is the RdRp catalytic domain; sequence DAVLETDIAS…HGVKSDKLLA (116 aa).

As to quaternary structure, interacts with mRNA-capping enzyme nsP1. Interacts with host DDX1. Interacts with host DDX3. Interacts (via C-terminus) with host G3BP1; this interaction inhibits the formation of host stress granules on viral mRNAs and the nsp3-G3BP1 complexes bind viral RNAs and probably orchestrate the assembly of viral replication complexes. Interacts (via C-terminus) with host G3BP2; this interaction inhibits the formation of host stress granules on viral mRNAs and the nsp3-G3BP2 complexes bind viral RNAs and probably orchestrate the assembly of viral replication complexes. In terms of assembly, interacts with mRNA-capping enzyme nsP1. Interacts with protease nsP2. interacts with itself. The cofactor is Mg(2+). It depends on Mn(2+) as a cofactor. Polyprotein P1234: Specific enzymatic cleavages in vivo yield mature proteins. The processing of the polyprotein is temporally regulated. In early stages (1.7 hpi), P1234 is first cleaved in trans through its nsP2 protease activity, releasing P123' and nsP4, which associate to form the early replication complex. At the same time, P1234 is also cut at the nsP1/nsP2 site early in infection but with lower efficiency. After replication of the viral minus-strand RNAs (4 hpi), the polyproteins are cut at the nsP1/nsP2 and nsP2/nsP3 sites very efficiently, preventing accumulation of P123' and P1234 and allowing the formation of the late replication complex. NsP3'/nsP4 site is not cleaved anymore and P34 is produced rather than nsP4. Post-translationally, specific enzymatic cleavages in vivo yield mature proteins. The processing of the polyprotein is temporally regulated. In early stages (1.7 hpi), P123 is cleaved at the nsP1/nsP2 site with low efficiency. After replication of the viral minus-strand RNAs (4 hpi), the polyproteins are cut at the nsP1/nsP2 and nsP2/nsP3 sites very efficiently, preventing accumulation of P123 and allowing the formation of the late replication complex. In terms of processing, specific enzymatic cleavages in vivo yield mature proteins. The processing of the polyprotein is temporally regulated. In early stages (1.7 hpi), P123' is cleaved at the nsP1/nsP2 site with low efficiency. After replication of the viral minus-strand RNAs (4 hpi), the polyproteins are cut at the nsP1/nsP2 and nsP2/nsP3 sites very efficiently, preventing accumulation of P123' and allowing the formation of the late replication complex. Phosphorylated by host on serines and threonines. Post-translationally, ubiquitinated; targets the protein for rapid degradation via the ubiquitin system. Nsp4 is present in extremely low quantities due to low frequency of translation through the amber stop-codon and the degradation by the ubiquitin pathway.

The protein localises to the host cytoplasmic vesicle membrane. The catalysed reaction is RNA(n) + a ribonucleoside 5'-triphosphate = RNA(n+1) + diphosphate. It catalyses the reaction RNA(n) + ATP = RNA(n)-3'-adenine ribonucleotide + diphosphate. The enzyme catalyses 4-O-(ADP-D-ribosyl)-L-aspartyl-[protein] + H2O = L-aspartyl-[protein] + ADP-D-ribose + H(+). It carries out the reaction 5-O-(ADP-D-ribosyl)-L-glutamyl-[protein] + H2O = L-glutamyl-[protein] + ADP-D-ribose + H(+). The catalysed reaction is ADP-alpha-D-ribose 1''-phosphate + H2O = ADP-D-ribose + phosphate. Its function is as follows. Polyprotein P1234: Inactive precursor of the viral replicase, which is activated by cleavages carried out by the viral protease nsP2. In terms of biological role, the early replication complex formed by the polyprotein P123 and nsP4 synthesizes minus-strand RNAs. As soon P123 is cleaved into mature proteins, the plus-strand RNAs synthesis begins. The early replication complex formed by the polyprotein P123' and nsP4 synthesizes minus-strand RNAs. Polyprotein P123' is a short-lived polyprotein that accumulates during early stage of infection. As soon P123' is cleaved into mature proteins, the plus-strand RNAs synthesis begins. Functionally, seems to be essential for minus-strand RNAs and subgenomic 26S mRNAs synthesis. Displays mono-ADP-ribosylhydrolase activity. ADP-ribosylation is a post-translational modification that controls various processes of the host cell and the virus probably needs to revert it for optimal viral replication. Binds proteins of FXR family and sequesters them into the viral RNA replication complexes thereby inhibiting the formation of host stress granules on viral mRNAs. The nsp3'-FXR complexes bind viral RNAs and probably orchestrate the assembly of viral replication complexes, thanks to the ability of FXR family members to self-assemble and bind DNA. Its function is as follows. Seems to be essential for minus-strand RNAs and subgenomic 26S mRNAs synthesis. Displays mono-ADP-ribosylhydrolase activity. ADP-ribosylation is a post-translantional modification that controls various processes of the host cell and the virus probably needs to revert it for optimal viral replication. Binds proteins of G3BP family and sequesters them into the viral RNA replication complexes thereby inhibiting the formation of host stress granules on viral mRNAs. The nsp3-G3BP complexes bind viral RNAs and probably orchestrate the assembly of viral replication complexes, thanks to the ability of G3BP family members to self-assemble and bind DNA. In terms of biological role, RNA dependent RNA polymerase. Replicates genomic and antigenomic RNA by recognizing replications specific signals. The early replication complex formed by the polyprotein P123 and nsP4 synthesizes minus-strand RNAs. The late replication complex composed of fully processed nsP1-nsP4 is responsible for the production of genomic and subgenomic plus-strand RNAs. The core catalytic domain of nsP4 also possesses terminal adenylyltransferase (TATase) activity that is probably involved in maintenance and repair of the poly(A) tail, an element required for replication of the viral genome. The sequence is that of Polyprotein nsP1234 from Middelburg virus.